A 121-amino-acid polypeptide reads, in one-letter code: uncharacterized protein (121 aa).

Disordered regions lie at residues 24–43 (SGRT…GRGG) and 100–121 (DHEN…TDQR).

This is an uncharacterized protein from Homo sapiens (Human).